The following is a 217-amino-acid chain: 3,4-dihydroxy-2-butanone 4-phosphate synthase (217 aa).

Residues 37-38 (RE), aspartate 42, 150-154 (RRGHT), and glutamate 174 each bind D-ribulose 5-phosphate. Mg(2+) is bound at residue glutamate 38. Histidine 153 is a binding site for Mg(2+).

Belongs to the DHBP synthase family. Homodimer. Mg(2+) is required as a cofactor. Requires Mn(2+) as cofactor.

The enzyme catalyses D-ribulose 5-phosphate = (2S)-2-hydroxy-3-oxobutyl phosphate + formate + H(+). Its pathway is cofactor biosynthesis; riboflavin biosynthesis; 2-hydroxy-3-oxobutyl phosphate from D-ribulose 5-phosphate: step 1/1. Catalyzes the conversion of D-ribulose 5-phosphate to formate and 3,4-dihydroxy-2-butanone 4-phosphate. This Syntrophotalea carbinolica (strain DSM 2380 / NBRC 103641 / GraBd1) (Pelobacter carbinolicus) protein is 3,4-dihydroxy-2-butanone 4-phosphate synthase.